A 118-amino-acid polypeptide reads, in one-letter code: Large ribosomal subunit protein uL18 (118 aa).

Belongs to the universal ribosomal protein uL18 family. As to quaternary structure, part of the 50S ribosomal subunit; part of the 5S rRNA/L5/L18/L25 subcomplex. Contacts the 5S and 23S rRNAs.

Functionally, this is one of the proteins that bind and probably mediate the attachment of the 5S RNA into the large ribosomal subunit, where it forms part of the central protuberance. The chain is Large ribosomal subunit protein uL18 from Campylobacter lari (strain RM2100 / D67 / ATCC BAA-1060).